Reading from the N-terminus, the 339-residue chain is Cathepsin B (339 aa).

An N-terminal signal peptide occupies residues 1–17 (MWWLWASLCCLLALGDA). Positions 18–79 (RSRPSFHPLS…QRVMFTEDLK (62 aa)) are cleaved as a propeptide — activation peptide. 6 cysteine pairs are disulfide-bonded: Cys93–Cys122, Cys105–Cys150, Cys141–Cys207, Cys142–Cys146, Cys179–Cys211, and Cys187–Cys198. Cys108 is an active-site residue. Asn192 carries N-linked (GlcNAc...) asparagine glycosylation. Lys220 is subject to N6-acetyllysine. Residues His278 and Asn298 contribute to the active site. A propeptide spanning residues 334 to 339 (QYWEKI) is cleaved from the precursor.

This sequence belongs to the peptidase C1 family. As to quaternary structure, dimer of a heavy chain and a light chain cross-linked by a disulfide bond. Interacts with SRPX2. Directly interacts with SHKBP1.

It localises to the lysosome. The protein localises to the melanosome. The protein resides in the secreted. Its subcellular location is the extracellular space. It is found in the apical cell membrane. The enzyme catalyses Hydrolysis of proteins with broad specificity for peptide bonds. Preferentially cleaves -Arg-Arg-|-Xaa bonds in small molecule substrates (thus differing from cathepsin L). In addition to being an endopeptidase, shows peptidyl-dipeptidase activity, liberating C-terminal dipeptides.. In terms of biological role, thiol protease which is believed to participate in intracellular degradation and turnover of proteins. Cleaves matrix extracellular phosphoglycoprotein MEPE. Involved in the solubilization of cross-linked TG/thyroglobulin in the thyroid follicle lumen. Has also been implicated in tumor invasion and metastasis. This chain is Cathepsin B (CTSB), found in Macaca fascicularis (Crab-eating macaque).